Consider the following 365-residue polypeptide: tRNA N6-adenosine threonylcarbamoyltransferase (365 aa).

Positions 119 and 123 each coordinate Fe cation. Substrate-binding positions include Leu-141–Gly-145, Asp-174, Gly-187, and Asn-288. Fe cation is bound at residue Asp-316.

Belongs to the KAE1 / TsaD family. It depends on Fe(2+) as a cofactor.

The protein localises to the cytoplasm. The catalysed reaction is L-threonylcarbamoyladenylate + adenosine(37) in tRNA = N(6)-L-threonylcarbamoyladenosine(37) in tRNA + AMP + H(+). Required for the formation of a threonylcarbamoyl group on adenosine at position 37 (t(6)A37) in tRNAs that read codons beginning with adenine. Is involved in the transfer of the threonylcarbamoyl moiety of threonylcarbamoyl-AMP (TC-AMP) to the N6 group of A37, together with TsaE and TsaB. TsaD likely plays a direct catalytic role in this reaction. The sequence is that of tRNA N6-adenosine threonylcarbamoyltransferase from Rhizobium leguminosarum bv. trifolii (strain WSM2304).